Here is a 528-residue protein sequence, read N- to C-terminus: MSKQILYQDDARKALEKGMDILTEAVSVTLGPKGRNVVLEKKFGAPQIINDGVTIAKEISLENHIENTGVALIRQAASKTNDVAGDGTTTATVLASAIVKQGMRNVAAGSNPMAIKKGIEKATNFVVSKIAEYAKPVEDTKAIIQVASLSSGNDIEVGKMIANAIEKVGREGVISLEEGKSTNTILEITEGMQFEKGFISPYFVTDTERMEVLQENPFILFTDKKITLVQQELVPLLEQIAKTSRPLLIIAEDIEKEALATIVVNKLRGILNVVAVRAPGFGDRRKSLLEDMSILTNGQVITEDAGLSLDTVQLDMLGKARRVIVTKDSTTIIADGHEIKVKSRCEQIKRQIETSDSLYEREKLQERLAKLSGGVAVIKVGAATETEMKDKKLRLGDAINATKAAIEEGIVPGGGATNVHISSELFTWAKNNLVEDELIGALIVERAVTYPLRRIAFNAGDNGAVIVEKVKSHDFHIGYDAANGNIVNMYDRGIIDPAKVARSALQNAASIAAMVLTTECIVVDKVDD.

Residues 29 to 32 (TLGP), 86 to 90 (DGTTT), glycine 414, 480 to 482 (DAA), and aspartate 496 each bind ATP.

This sequence belongs to the chaperonin (HSP60) family. In terms of assembly, forms a cylinder of 14 subunits composed of two heptameric rings stacked back-to-back. Interacts with the co-chaperonin GroES.

It is found in the plastid. It localises to the chloroplast. The catalysed reaction is ATP + H2O + a folded polypeptide = ADP + phosphate + an unfolded polypeptide.. In terms of biological role, together with its co-chaperonin GroES, plays an essential role in assisting protein folding. The GroEL-GroES system forms a nano-cage that allows encapsulation of the non-native substrate proteins and provides a physical environment optimized to promote and accelerate protein folding. The polypeptide is Chaperonin GroEL, chloroplastic (Pyropia yezoensis (Susabi-nori)).